The sequence spans 115 residues: Guanylin (115 aa).

A signal peptide spans 1–23 (MNAWLLSVLCLLGALAVLVEGVT). A propeptide spanning residues 24 to 100 (VQDGDLSFPL…LQRLEAIAQD (77 aa)) is cleaved from the precursor. Cystine bridges form between cysteine 69–cysteine 82, cysteine 104–cysteine 112, and cysteine 107–cysteine 115.

It belongs to the guanylin family. Intestine and in low abundance in adrenal gland, kidney, and uterus/oviduct.

The protein localises to the secreted. Endogenous activator of intestinal guanylate cyclase. It stimulates this enzyme through the same receptor binding region as the heat-stable enterotoxins. This Rattus norvegicus (Rat) protein is Guanylin (Guca2a).